Here is a 252-residue protein sequence, read N- to C-terminus: MAGHSKWANIKRQKAVVDAKKGKTFTQLSRAIIVAARSGVPDPALNFQLRTAIDKAKAASIPNDNIERAIAKGAGTFGGDNAIFEAIRYEGYGPGGVAILIEAFTDNRNRTAADLRVAFSKNGGNLGETGCVSWMFDQKGVCVVQGVIDEEQLLEASLEGGAESYEMTEDEMAEVFTDIGNLEALSQTLKNQGFKVTDAEFRWIPSNSVEVTDPDQARSLFKLIDTLEGLDDVQNVTANFDITEELMALSIS.

This sequence belongs to the TACO1 family.

The protein resides in the cytoplasm. In Nostoc punctiforme (strain ATCC 29133 / PCC 73102), this protein is Probable transcriptional regulatory protein Npun_R5651.